The primary structure comprises 563 residues: Arginine--tRNA ligase (563 aa).

A 'HIGH' region motif is present at residues 121–131 (PNIAKPFSIGH).

Belongs to the class-I aminoacyl-tRNA synthetase family. Monomer.

The protein resides in the cytoplasm. The enzyme catalyses tRNA(Arg) + L-arginine + ATP = L-arginyl-tRNA(Arg) + AMP + diphosphate. The chain is Arginine--tRNA ligase from Streptococcus mutans serotype c (strain ATCC 700610 / UA159).